The following is a 61-amino-acid chain: Short neurotoxin 1 (61 aa).

Disulfide bonds link Cys3/Cys23, Cys17/Cys40, Cys42/Cys53, and Cys54/Cys59.

This sequence belongs to the three-finger toxin family. Short-chain subfamily. Type I alpha-neurotoxin sub-subfamily. As to expression, expressed by the venom gland.

It is found in the secreted. Functionally, binds with high affinity to muscular nicotinic acetylcholine receptors (nAChRs) (tested on Torpedo marmorata AChR, Kd=0.07 nM) and with low affinity to neuronal alpha-7/CHRNA7 nAChRs (tested on chimeric receptor, Kd=3 uM) and inhibit acetylcholine from binding to the receptor, thereby impairing neuromuscular transmission. Produces peripheral paralysis by blocking neuromuscular transmission at the postsynaptic site. In Naja pallida (Red spitting cobra), this protein is Short neurotoxin 1.